A 286-amino-acid chain; its full sequence is Beta-lactamase TEM (286 aa).

A signal peptide spans 1–23 (MSIQHFRVALIPFFAAFCLPVFA). S68 (acyl-ester intermediate) is an active-site residue. An intrachain disulfide couples C75 to C121. E166 (proton acceptor) is an active-site residue. 232-234 (KSG) contributes to the substrate binding site.

This sequence belongs to the class-A beta-lactamase family.

The catalysed reaction is a beta-lactam + H2O = a substituted beta-amino acid. Its function is as follows. TEM-type are the most prevalent beta-lactamases in enterobacteria; they hydrolyze the beta-lactam bond in susceptible beta-lactam antibiotics, thus conferring resistance to penicillins and cephalosporins. TEM-3 and TEM-4 are capable of hydrolyzing cefotaxime and ceftazidime. TEM-5 is capable of hydrolyzing ceftazidime. TEM-6 is capable of hydrolyzing ceftazidime and aztreonam. TEM-8/CAZ-2, TEM-16/CAZ-7 and TEM-24/CAZ-6 are markedly active against ceftazidime. IRT-4 shows resistance to beta-lactamase inhibitors. This chain is Beta-lactamase TEM (bla), found in Escherichia coli.